Reading from the N-terminus, the 373-residue chain is Flagellar P-ring protein (373 aa).

The signal sequence occupies residues 1-30 (MTNRWSFDVKKNLVTLILTWLCLSISTAQA).

It belongs to the FlgI family. In terms of assembly, the basal body constitutes a major portion of the flagellar organelle and consists of four rings (L,P,S, and M) mounted on a central rod.

It localises to the periplasm. The protein resides in the bacterial flagellum basal body. Its function is as follows. Assembles around the rod to form the L-ring and probably protects the motor/basal body from shearing forces during rotation. This Aliivibrio salmonicida (strain LFI1238) (Vibrio salmonicida (strain LFI1238)) protein is Flagellar P-ring protein.